The following is a 264-amino-acid chain: Undecaprenyl-diphosphatase 2 (264 aa).

The next 7 membrane-spanning stretches (helical) occupy residues 29-49 (GSAF…SYFW), 77-97 (SWIV…SGVL), 107-127 (LTVI…AEIF), 137-157 (ASLA…IPGV), 180-200 (FSFL…LWEL), 212-232 (VLAT…WGLM), and 243-263 (FVIY…MGWL).

The protein belongs to the UppP family.

Its subcellular location is the cell inner membrane. It carries out the reaction di-trans,octa-cis-undecaprenyl diphosphate + H2O = di-trans,octa-cis-undecaprenyl phosphate + phosphate + H(+). Functionally, catalyzes the dephosphorylation of undecaprenyl diphosphate (UPP). Confers resistance to bacitracin. The protein is Undecaprenyl-diphosphatase 2 of Mesorhizobium japonicum (strain LMG 29417 / CECT 9101 / MAFF 303099) (Mesorhizobium loti (strain MAFF 303099)).